The sequence spans 160 residues: Type IV major fimbrial protein FimA (160 aa).

Residues 1-7 constitute a propeptide, leader sequence; that stretch reads MKSLQKG. Phe-8 carries the post-translational modification N-methylphenylalanine. The helical transmembrane segment at 8–28 threads the bilayer; it reads FTLIELMIVVAIIGILAAIAI.

Belongs to the N-Me-Phe pilin family. In terms of assembly, the pili are polar flexible filaments of about 5.4 nanometers diameter and 2.5 micrometers average length; they consist of only a single polypeptide chain arranged in a helical configuration of five subunits per turn in the assembled pilus.

The protein localises to the fimbrium. It localises to the membrane. Functionally, major component of the type IV fimbriae that plays an essential role in twitching motility, natural transformation, and protease secretion. The sequence is that of Type IV major fimbrial protein FimA (fimA) from Dichelobacter nodosus (Bacteroides nodosus).